Here is a 337-residue protein sequence, read N- to C-terminus: Glucose transporter 2C (337 aa).

The tract at residues 1–22 (MTERRDNVSHAPDAIEGPNDGA) is disordered. Residues 1 to 43 (MTERRDNVSHAPDAIEGPNDGAHAEDTSPGFFSLENLGVAQVQ) lie on the Cytoplasmic side of the membrane. The chain crosses the membrane as a helical span at residues 44–64 (VVGGTLNGFSIGFVAVYILLY). The Extracellular portion of the chain corresponds to 65–119 (EVATNCSLFKTTEACKAVGSYGCEWKDTEVCSWKKECDSDSDGVNPCESLIGYSS). Asn-69 is a glycosylation site (N-linked (GlcNAc...) asparagine). The helical transmembrane segment at 120 to 140 (LYSGIFASAMIVGSMVGSIIA) threads the bilayer. Over 141-152 (GKCITMFGLKKS) the chain is Cytoplasmic. The helical transmembrane segment at 153–173 (FIIVGVMSVVASALNHISVAT) threads the bilayer. The Extracellular segment spans residues 174–175 (NE). The chain crosses the membrane as a helical span at residues 176 to 196 (FWVLCAGRVLMGIGLGVVCVI). The Cytoplasmic segment spans residues 197-214 (CPMYVNENAHPKLSKVDG). Residues 215–235 (VLFQVFITFGIMLAAMLGLIL) traverse the membrane as a helical segment. Over 236-250 (DKTVNYDNDPDMAGR) the chain is Extracellular. Residues 251 to 271 (FHGFCAVSSVLSVAMFLVGMF) traverse the membrane as a helical segment. Residues 272–300 (LRESTATFSQDDDGKADGGMDPNEYGWGQ) are Cytoplasmic-facing. Residues 301–321 (MLWPLFMGAVTAGTLQLTGIN) form a helical membrane-spanning segment. The Extracellular portion of the chain corresponds to 322–337 (AVMNYAPKITENLGMD).

This sequence belongs to the major facilitator superfamily. Sugar transporter (TC 2.A.1.1) family.

Its subcellular location is the membrane. Its function is as follows. Facilitative glucose transporter. This Trypanosoma brucei brucei protein is Glucose transporter 2C (THT2C).